A 329-amino-acid chain; its full sequence is Holliday junction branch migration complex subunit RuvB (329 aa).

The tract at residues 1–180 (MKNILQSTEC…FGIPIHLEFY (180 aa)) is large ATPase domain (RuvB-L). ATP contacts are provided by residues I19, R20, G61, K64, T65, T66, 127 to 129 (EDF), R170, Y180, and R217. A Mg(2+)-binding site is contributed by T65. The segment at 181–252 (STEELIKVIQ…FADKALLRLG (72 aa)) is small ATPAse domain (RuvB-S). A head domain (RuvB-H) region spans residues 255-329 (KLGLDRQDIQ…ISYLKEQSYI (75 aa)). Positions 308 and 313 each coordinate DNA.

It belongs to the RuvB family. Homohexamer. Forms an RuvA(8)-RuvB(12)-Holliday junction (HJ) complex. HJ DNA is sandwiched between 2 RuvA tetramers; dsDNA enters through RuvA and exits via RuvB. An RuvB hexamer assembles on each DNA strand where it exits the tetramer. Each RuvB hexamer is contacted by two RuvA subunits (via domain III) on 2 adjacent RuvB subunits; this complex drives branch migration. In the full resolvosome a probable DNA-RuvA(4)-RuvB(12)-RuvC(2) complex forms which resolves the HJ.

It is found in the cytoplasm. The enzyme catalyses ATP + H2O = ADP + phosphate + H(+). Functionally, the RuvA-RuvB-RuvC complex processes Holliday junction (HJ) DNA during genetic recombination and DNA repair, while the RuvA-RuvB complex plays an important role in the rescue of blocked DNA replication forks via replication fork reversal (RFR). RuvA specifically binds to HJ cruciform DNA, conferring on it an open structure. The RuvB hexamer acts as an ATP-dependent pump, pulling dsDNA into and through the RuvAB complex. RuvB forms 2 homohexamers on either side of HJ DNA bound by 1 or 2 RuvA tetramers; 4 subunits per hexamer contact DNA at a time. Coordinated motions by a converter formed by DNA-disengaged RuvB subunits stimulates ATP hydrolysis and nucleotide exchange. Immobilization of the converter enables RuvB to convert the ATP-contained energy into a lever motion, pulling 2 nucleotides of DNA out of the RuvA tetramer per ATP hydrolyzed, thus driving DNA branch migration. The RuvB motors rotate together with the DNA substrate, which together with the progressing nucleotide cycle form the mechanistic basis for DNA recombination by continuous HJ branch migration. Branch migration allows RuvC to scan DNA until it finds its consensus sequence, where it cleaves and resolves cruciform DNA. The protein is Holliday junction branch migration complex subunit RuvB of Ehrlichia canis (strain Jake).